Here is a 175-residue protein sequence, read N- to C-terminus: Small ribosomal subunit protein uS9 (175 aa).

This sequence belongs to the universal ribosomal protein uS9 family.

This chain is Small ribosomal subunit protein uS9, found in Streptomyces griseus subsp. griseus (strain JCM 4626 / CBS 651.72 / NBRC 13350 / KCC S-0626 / ISP 5235).